Here is a 119-residue protein sequence, read N- to C-terminus: Ribonuclease P protein component (119 aa).

This sequence belongs to the RnpA family. As to quaternary structure, consists of a catalytic RNA component (M1 or rnpB) and a protein subunit.

The enzyme catalyses Endonucleolytic cleavage of RNA, removing 5'-extranucleotides from tRNA precursor.. Its function is as follows. RNaseP catalyzes the removal of the 5'-leader sequence from pre-tRNA to produce the mature 5'-terminus. It can also cleave other RNA substrates such as 4.5S RNA. The protein component plays an auxiliary but essential role in vivo by binding to the 5'-leader sequence and broadening the substrate specificity of the ribozyme. This Listeria monocytogenes serotype 4a (strain HCC23) protein is Ribonuclease P protein component.